The chain runs to 343 residues: Phosphoribosylformylglycinamidine cyclo-ligase (343 aa).

The protein belongs to the AIR synthase family.

It localises to the cytoplasm. It catalyses the reaction 2-formamido-N(1)-(5-O-phospho-beta-D-ribosyl)acetamidine + ATP = 5-amino-1-(5-phospho-beta-D-ribosyl)imidazole + ADP + phosphate + H(+). It participates in purine metabolism; IMP biosynthesis via de novo pathway; 5-amino-1-(5-phospho-D-ribosyl)imidazole from N(2)-formyl-N(1)-(5-phospho-D-ribosyl)glycinamide: step 2/2. The polypeptide is Phosphoribosylformylglycinamidine cyclo-ligase (Rippkaea orientalis (strain PCC 8801 / RF-1) (Cyanothece sp. (strain PCC 8801))).